We begin with the raw amino-acid sequence, 298 residues long: MKILVTGANGQVGWELARSLAVLGQVVPLARDEADLGRPETLARIVEDAKPDVVVNAAAYTAVDAAESDGAAAKVVNGEAVGVLAAATKRVGGLFVHYSTDYVFDGTKSSPYIETDPTCPVNAYGASKLLGELAVAETGGDWLTFRTTWVFAARGKNFLRTMLRLAKEREEMKIVADQFGAPTWARSIADGTAHALATAMRERAAGAFTSGVYHMTSAGQTSWHGFADAIVASWRAVPGAAPLAVSRIVPIPTSAYPVPARRPANSVLSNEALKERFGIELPDWRYAVGLCVRDLLSQ.

NADH contacts are provided by residues 10 to 12 (GQV), 35 to 36 (DL), and 59 to 61 (AYT). Residues 11–12 (QV), 35–36 (DL), 59–61 (AYT), and tyrosine 98 each bind NADPH. Residue 100–101 (TD) coordinates dTDP-beta-L-rhamnose. 2 residues coordinate NADH: tyrosine 124 and lysine 128. Residues tyrosine 124 and lysine 128 each contribute to the NADPH site. The Proton donor/acceptor role is filled by tyrosine 124. Tryptophan 149 provides a ligand contact to dTDP-beta-L-rhamnose.

Belongs to the dTDP-4-dehydrorhamnose reductase family. As to quaternary structure, homodimer. Mg(2+) serves as cofactor.

It catalyses the reaction dTDP-beta-L-rhamnose + NADP(+) = dTDP-4-dehydro-beta-L-rhamnose + NADPH + H(+). The protein operates within carbohydrate biosynthesis; dTDP-L-rhamnose biosynthesis. Its pathway is bacterial outer membrane biogenesis; LPS O-antigen biosynthesis. Its function is as follows. Involved in the biosynthesis of the dTDP-L-rhamnose which is an important component of lipopolysaccharide (LPS). Catalyzes the reduction of dTDP-6-deoxy-L-lyxo-4-hexulose to yield dTDP-L-rhamnose. The protein is dTDP-4-dehydrorhamnose reductase of Burkholderia thailandensis (strain ATCC 700388 / DSM 13276 / CCUG 48851 / CIP 106301 / E264).